Consider the following 188-residue polypeptide: Elongation factor P (188 aa).

The protein belongs to the elongation factor P family.

Its subcellular location is the cytoplasm. Its pathway is protein biosynthesis; polypeptide chain elongation. In terms of biological role, involved in peptide bond synthesis. Stimulates efficient translation and peptide-bond synthesis on native or reconstituted 70S ribosomes in vitro. Probably functions indirectly by altering the affinity of the ribosome for aminoacyl-tRNA, thus increasing their reactivity as acceptors for peptidyl transferase. The chain is Elongation factor P from Wolbachia sp. subsp. Drosophila simulans (strain wRi).